Here is a 156-residue protein sequence, read N- to C-terminus: ATP synthase subunit b (156 aa).

The chain crosses the membrane as a helical span at residues Ala11 to Ala31.

It belongs to the ATPase B chain family. In terms of assembly, F-type ATPases have 2 components, F(1) - the catalytic core - and F(0) - the membrane proton channel. F(1) has five subunits: alpha(3), beta(3), gamma(1), delta(1), epsilon(1). F(0) has three main subunits: a(1), b(2) and c(10-14). The alpha and beta chains form an alternating ring which encloses part of the gamma chain. F(1) is attached to F(0) by a central stalk formed by the gamma and epsilon chains, while a peripheral stalk is formed by the delta and b chains.

It localises to the cell inner membrane. Functionally, f(1)F(0) ATP synthase produces ATP from ADP in the presence of a proton or sodium gradient. F-type ATPases consist of two structural domains, F(1) containing the extramembraneous catalytic core and F(0) containing the membrane proton channel, linked together by a central stalk and a peripheral stalk. During catalysis, ATP synthesis in the catalytic domain of F(1) is coupled via a rotary mechanism of the central stalk subunits to proton translocation. Its function is as follows. Component of the F(0) channel, it forms part of the peripheral stalk, linking F(1) to F(0). The protein is ATP synthase subunit b of Cronobacter sakazakii (strain ATCC BAA-894) (Enterobacter sakazakii).